The sequence spans 759 residues: Catalase-peroxidase (759 aa).

Residues 1-24 form a disordered region; that stretch reads MTQDKCPFKEQSSQPNFAGGGTSN. The tryptophyl-tyrosyl-methioninium (Trp-Tyr) (with M-268) cross-link spans 96–242; the sequence is WHSAGTYRVF…LAAAHMGLIY (147 aa). Histidine 97 serves as the catalytic Proton acceptor. Positions 242–268 form a cross-link, tryptophyl-tyrosyl-methioninium (Tyr-Met) (with W-96); it reads YVNPEGPDGNPDPVAAAHDIRDTFGRM. Residue histidine 283 participates in heme b binding.

This sequence belongs to the peroxidase family. Peroxidase/catalase subfamily. Homodimer or homotetramer. The cofactor is heme b. In terms of processing, formation of the three residue Trp-Tyr-Met cross-link is important for the catalase, but not the peroxidase activity of the enzyme.

It is found in the cytoplasm. It catalyses the reaction H2O2 + AH2 = A + 2 H2O. It carries out the reaction 2 H2O2 = O2 + 2 H2O. In terms of biological role, bifunctional enzyme with both catalase and broad-spectrum peroxidase activity. This is Catalase-peroxidase from Aspergillus fumigatus (strain CBS 144.89 / FGSC A1163 / CEA10) (Neosartorya fumigata).